A 251-amino-acid chain; its full sequence is MVDQTKQTTHFGFRTVAKDEKAGMVAEVFHSVAAKYDLMNDLMSFGIHRIWKRVAIDASGVRRGQRILDLAGGTGDLTAKFSRIVGEKGEVVLADINESMLKVGREKLRDVGIVGNVSYVQANAEALPFPDNYFNCITISFGLRNVTEKEKALRSMFRVLKPGGRLLVLEFSKPLFAPLSKAYDAYSFHVLPKIGQVFVQDAGSYRYLAESIRMHPDQDTLKTMMEEAGFEQVTYTNMTGGIVALHRGFKF.

Residues T74, D95, N123–A124, and S140 each bind S-adenosyl-L-methionine.

The protein belongs to the class I-like SAM-binding methyltransferase superfamily. MenG/UbiE family.

It carries out the reaction a 2-demethylmenaquinol + S-adenosyl-L-methionine = a menaquinol + S-adenosyl-L-homocysteine + H(+). The enzyme catalyses a 2-methoxy-6-(all-trans-polyprenyl)benzene-1,4-diol + S-adenosyl-L-methionine = a 5-methoxy-2-methyl-3-(all-trans-polyprenyl)benzene-1,4-diol + S-adenosyl-L-homocysteine + H(+). It participates in quinol/quinone metabolism; menaquinone biosynthesis; menaquinol from 1,4-dihydroxy-2-naphthoate: step 2/2. It functions in the pathway cofactor biosynthesis; ubiquinone biosynthesis. Methyltransferase required for the conversion of demethylmenaquinol (DMKH2) to menaquinol (MKH2) and the conversion of 2-polyprenyl-6-methoxy-1,4-benzoquinol (DDMQH2) to 2-polyprenyl-3-methyl-6-methoxy-1,4-benzoquinol (DMQH2). This is Ubiquinone/menaquinone biosynthesis C-methyltransferase UbiE from Photorhabdus laumondii subsp. laumondii (strain DSM 15139 / CIP 105565 / TT01) (Photorhabdus luminescens subsp. laumondii).